Here is a 433-residue protein sequence, read N- to C-terminus: 5-methylthioadenosine/S-adenosylhomocysteine deaminase (433 aa).

Residues histidine 67 and histidine 69 each contribute to the Zn(2+) site. Positions 96, 148, and 186 each coordinate substrate. Residue histidine 213 participates in Zn(2+) binding. The substrate site is built by glutamate 216 and aspartate 301. Aspartate 301 contributes to the Zn(2+) binding site.

Belongs to the metallo-dependent hydrolases superfamily. MTA/SAH deaminase family. Zn(2+) is required as a cofactor.

The catalysed reaction is S-adenosyl-L-homocysteine + H2O + H(+) = S-inosyl-L-homocysteine + NH4(+). The enzyme catalyses S-methyl-5'-thioadenosine + H2O + H(+) = S-methyl-5'-thioinosine + NH4(+). In terms of biological role, catalyzes the deamination of 5-methylthioadenosine and S-adenosyl-L-homocysteine into 5-methylthioinosine and S-inosyl-L-homocysteine, respectively. Is also able to deaminate adenosine. The sequence is that of 5-methylthioadenosine/S-adenosylhomocysteine deaminase from Desulforamulus reducens (strain ATCC BAA-1160 / DSM 100696 / MI-1) (Desulfotomaculum reducens).